Here is a 660-residue protein sequence, read N- to C-terminus: Acetyl-coenzyme A synthetase (660 aa).

CoA-binding positions include arginine 197–lysine 200 and threonine 317. ATP-binding positions include glycine 397–proline 399, aspartate 421–threonine 426, aspartate 512, and arginine 528. Position 536 (serine 536) interacts with CoA. ATP is bound at residue arginine 539. 2 residues coordinate Mg(2+): valine 550 and valine 555. Lysine 625 bears the N6-acetyllysine mark.

It belongs to the ATP-dependent AMP-binding enzyme family. Mg(2+) is required as a cofactor. Post-translationally, acetylated. Deacetylation by the SIR2-homolog deacetylase activates the enzyme.

The enzyme catalyses acetate + ATP + CoA = acetyl-CoA + AMP + diphosphate. Catalyzes the conversion of acetate into acetyl-CoA (AcCoA), an essential intermediate at the junction of anabolic and catabolic pathways. AcsA undergoes a two-step reaction. In the first half reaction, AcsA combines acetate with ATP to form acetyl-adenylate (AcAMP) intermediate. In the second half reaction, it can then transfer the acetyl group from AcAMP to the sulfhydryl group of CoA, forming the product AcCoA. This Herminiimonas arsenicoxydans protein is Acetyl-coenzyme A synthetase.